The following is a 241-amino-acid chain: DnaA regulatory inactivator Hda (241 aa).

The protein belongs to the DnaA family. HdA subfamily. As to quaternary structure, the active form seems to be an ADP-bound monomer. Forms the RIDA complex (regulatory inactivation of DnaA) of ATP-DnaA, ADP-Hda and the DNA-loaded beta sliding clamp (dnaN).

Its function is as follows. Mediates the interaction of DNA replication initiator protein DnaA with DNA polymerase subunit beta sliding clamp (dnaN). Stimulates hydrolysis of ATP-DnaA to ADP-DnaA, rendering DnaA inactive for reinitiation, a process called regulatory inhibition of DnaA or RIDA. This Salmonella agona (strain SL483) protein is DnaA regulatory inactivator Hda.